Here is a 279-residue protein sequence, read N- to C-terminus: 3-methyl-2-oxobutanoate hydroxymethyltransferase (279 aa).

Mg(2+)-binding residues include Asp43 and Asp82. 3-methyl-2-oxobutanoate is bound by residues 43-44 (DS), Asp82, and Lys112. Glu114 provides a ligand contact to Mg(2+). The active-site Proton acceptor is the Glu181.

This sequence belongs to the PanB family. In terms of assembly, homodecamer; pentamer of dimers. It depends on Mg(2+) as a cofactor.

It localises to the cytoplasm. It carries out the reaction 3-methyl-2-oxobutanoate + (6R)-5,10-methylene-5,6,7,8-tetrahydrofolate + H2O = 2-dehydropantoate + (6S)-5,6,7,8-tetrahydrofolate. It functions in the pathway cofactor biosynthesis; (R)-pantothenate biosynthesis; (R)-pantoate from 3-methyl-2-oxobutanoate: step 1/2. In terms of biological role, catalyzes the reversible reaction in which hydroxymethyl group from 5,10-methylenetetrahydrofolate is transferred onto alpha-ketoisovalerate to form ketopantoate. In Shouchella clausii (strain KSM-K16) (Alkalihalobacillus clausii), this protein is 3-methyl-2-oxobutanoate hydroxymethyltransferase.